We begin with the raw amino-acid sequence, 391 residues long: 3-ketoacyl-CoA thiolase (391 aa).

The active-site Acyl-thioester intermediate is Cys95. Residues His347 and Cys377 each act as proton acceptor in the active site.

Belongs to the thiolase-like superfamily. Thiolase family. Heterotetramer of two alpha chains (FadB) and two beta chains (FadA).

Its subcellular location is the cytoplasm. It catalyses the reaction an acyl-CoA + acetyl-CoA = a 3-oxoacyl-CoA + CoA. It participates in lipid metabolism; fatty acid beta-oxidation. Its function is as follows. Catalyzes the final step of fatty acid oxidation in which acetyl-CoA is released and the CoA ester of a fatty acid two carbons shorter is formed. This chain is 3-ketoacyl-CoA thiolase, found in Hahella chejuensis (strain KCTC 2396).